We begin with the raw amino-acid sequence, 234 residues long: Transmembrane protein 65 (234 aa).

A mitochondrion-targeting transit peptide spans 1–55 (MSRLLPLLGSRTARSLRPGPAAAPRLPSWCCCGRGLLALGVPGGPRLLGTHPKKE). Over 56-110 (PMEALNTAQGARDFIYSLHSTERSCLLKELHRFESIAIAQEKLEALPPTPGQLRY) the chain is Cytoplasmic. A helical transmembrane segment spans residues 111–131 (VFFHNAIPFVGFGFLDNAIMI). Over 132–138 (VAGTQIE) the chain is Extracellular. A helical membrane pass occupies residues 139–159 (LSIGIILGISTMAAAALGNLV). The Cytoplasmic portion of the chain corresponds to 160–203 (SDLAGLGLAGYVEALASRLGLSIPDLTPKQVDMWQTRVSTHLGK). A helical transmembrane segment spans residues 204–224 (AVGVTIGCILGMFPLIFFGGS). Residues 225–234 (EEDEKLETTN) lie on the Extracellular side of the membrane.

As to quaternary structure, monomer. Homodimer. Interacts with GJA1. Interacts weakly with DSP. Interacts with SCN1B. In terms of tissue distribution, predominantly expressed in the ventricular tissue (at protein level).

The protein resides in the cell membrane. It is found in the mitochondrion inner membrane. In terms of biological role, essential for maintaining proper cardiac intercalated disk (ICD) structure and function as well as cardiac conduction velocity in the heart. Its association with SCN1B is required for stabilizing the perinexus in the ICD and for localization of GJA1 and SCN5A to the ICD. May regulate the function of the gap junction protein GJA1 and may contribute to the stability and proper localization of GJA1 to cardiac intercalated disk thereby regulating gap junction communication. Regulates mitochondrial respiration and mitochondrial DNA copy number maintenance. The sequence is that of Transmembrane protein 65 (Tmem65) from Mus musculus (Mouse).